A 207-amino-acid chain; its full sequence is Small ribosomal subunit protein uS4 (207 aa).

Positions 31–51 are disordered; that stretch reads KCKLDSKPGQHGRTSGARTSD. An S4 RNA-binding domain is found at 97–160; the sequence is SRLDNVVYRM…KKQARIRESL (64 aa).

Belongs to the universal ribosomal protein uS4 family. Part of the 30S ribosomal subunit. Contacts protein S5. The interaction surface between S4 and S5 is involved in control of translational fidelity.

Functionally, one of the primary rRNA binding proteins, it binds directly to 16S rRNA where it nucleates assembly of the body of the 30S subunit. Its function is as follows. With S5 and S12 plays an important role in translational accuracy. This chain is Small ribosomal subunit protein uS4, found in Bordetella avium (strain 197N).